The sequence spans 82 residues: Delta-conotoxin-like SmVIA (82 aa).

An N-terminal signal peptide occupies residues 1–22 (MKLTCVMIVAVLFLIAWTFVTA). Residues 23 to 49 (DDSRNGLKNLFPKARHEMKNPEASKLN) constitute a propeptide that is removed on maturation. Cystine bridges form between cysteine 54–cysteine 69, cysteine 61–cysteine 73, and cysteine 68–cysteine 77. Proline 65 is subject to 4-hydroxyproline.

It belongs to the conotoxin O1 superfamily. In terms of tissue distribution, expressed by the venom duct.

Its subcellular location is the secreted. In terms of biological role, delta-conotoxins bind to site 6 of voltage-gated sodium channels (Nav) and inhibit the inactivation process. This Conus stercusmuscarum (Fly-specked cone) protein is Delta-conotoxin-like SmVIA.